Here is a 675-residue protein sequence, read N- to C-terminus: PTS system glucose-specific EIICBA component (675 aa).

Positions 3-414 (KKLFGQLQRI…FNFKTPGRED (412 aa)) constitute a PTS EIIC type-1 domain. A run of 11 helical transmembrane segments spans residues 16–36 (LMLP…GTAF), 59–79 (MMTG…ALGV), 81–101 (IGLA…FIIM), 126–146 (VLGI…GALA), 173–193 (IMMA…WPFI), 199–219 (AFST…FGFI), 273–293 (FMQG…LAIY), 303–323 (VVGG…ITEP), 328–348 (FLFV…LSFL), 355–375 (LHLG…GILP), and 378–398 (TPWW…YVVF). Residues 425–506 (SKLPFDVLDA…ARIMNGDITK (82 aa)) form the PTS EIIB type-1 domain. The Phosphocysteine intermediate; for EIIB activity role is filled by C447. The 105-residue stretch at 547–651 (DKVFSEKMMG…SVVTPVIITN (105 aa)) folds into the PTS EIIA type-1 domain. H599 serves as the catalytic Tele-phosphohistidine intermediate; for EIIA activity.

It is found in the cell membrane. The enzyme catalyses N(pros)-phospho-L-histidyl-[protein] + D-glucose(out) = D-glucose 6-phosphate(in) + L-histidyl-[protein]. In terms of biological role, the phosphoenolpyruvate-dependent sugar phosphotransferase system (sugar PTS), a major carbohydrate active transport system, catalyzes the phosphorylation of incoming sugar substrates concomitantly with their translocation across the cell membrane. This system is involved in glucose transport. The polypeptide is PTS system glucose-specific EIICBA component (ptsG) (Staphylococcus haemolyticus (strain JCSC1435)).